The primary structure comprises 131 residues: Protein FON2 SPARE1 (131 aa).

A signal peptide spans 1-22 (MSRRLGAAAAVLLLWLAVLTFA). A disordered region spans residues 67 to 131 (SPSSLTTTDR…VPTGPNPLHH (65 aa)). The segment covering 76–97 (RHHHHHRHHGHHHHRGHDRWNR) has biased composition (basic residues).

Belongs to the CLV3/ESR signal peptide family. Expressed in all aerial apical meristems, including the floral and inflorescence meristems in the reproductive phase and the shoot apical meristem in the vegetative phase. Also detected in the primordia of lateral organs such as the leaf and the floral organs.

Its subcellular location is the secreted. In terms of biological role, involved in the maintenance of the floral meristem and of the shoot apical meristem in the vegetative phase. Suppresses the fon2 mutation and acts independently of FON1. In Oryza sativa subsp. japonica, the protein has a single amino acid substitution at the putative processing site of the signal peptide and is inactive. This chain is Protein FON2 SPARE1 (FOS1), found in Oryza sativa subsp. indica (Rice).